Reading from the N-terminus, the 173-residue chain is C-phycocyanin-3 beta subunit (173 aa).

An N4-methylasparagine modification is found at Asn73. (2R,3E)-phycocyanobilin contacts are provided by Cys83 and Cys154.

This sequence belongs to the phycobiliprotein family. As to quaternary structure, heterodimer of an alpha and a beta subunit, which further assembles into trimers and the trimers into hexamers. Contains two covalently linked bilin chromophores.

It localises to the cellular thylakoid membrane. Functionally, light-harvesting photosynthetic bile pigment-protein from the phycobiliprotein complex (phycobilisome, PBS). Phycocyanin is the major phycobiliprotein in the PBS rod. The protein is C-phycocyanin-3 beta subunit (cpcB3) of Microchaete diplosiphon (Fremyella diplosiphon).